Reading from the N-terminus, the 168-residue chain is UPF0304 protein MJECS11 (168 aa).

The protein belongs to the UPF0304 family.

This chain is UPF0304 protein MJECS11, found in Methanocaldococcus jannaschii (strain ATCC 43067 / DSM 2661 / JAL-1 / JCM 10045 / NBRC 100440) (Methanococcus jannaschii).